The primary structure comprises 255 residues: Putative transcription factor D5 (255 aa).

In terms of biological role, putative transcription factor required for the expression of viral late genes. In Escherichia coli (Enterobacteria phage T5), this protein is Putative transcription factor D5.